Consider the following 312-residue polypeptide: ADP-L-glycero-D-manno-heptose-6-epimerase (312 aa).

NADP(+)-binding positions include 10-11 (FI), 31-32 (DN), lysine 38, lysine 53, 75-79 (EGACS), and asparagine 92. The active-site Proton acceptor is the tyrosine 140. Position 144 (lysine 144) interacts with NADP(+). Asparagine 169 contacts substrate. NADP(+) is bound by residues valine 170 and lysine 178. Lysine 178 acts as the Proton acceptor in catalysis. Residues serine 180, histidine 187, 201–204 (FAGS), arginine 209, and tyrosine 274 each bind substrate.

Belongs to the NAD(P)-dependent epimerase/dehydratase family. HldD subfamily. In terms of assembly, homopentamer. NADP(+) serves as cofactor.

It catalyses the reaction ADP-D-glycero-beta-D-manno-heptose = ADP-L-glycero-beta-D-manno-heptose. The protein operates within nucleotide-sugar biosynthesis; ADP-L-glycero-beta-D-manno-heptose biosynthesis; ADP-L-glycero-beta-D-manno-heptose from D-glycero-beta-D-manno-heptose 7-phosphate: step 4/4. Its pathway is bacterial outer membrane biogenesis; LPS core biosynthesis. In terms of biological role, catalyzes the interconversion between ADP-D-glycero-beta-D-manno-heptose and ADP-L-glycero-beta-D-manno-heptose via an epimerization at carbon 6 of the heptose. This Photorhabdus laumondii subsp. laumondii (strain DSM 15139 / CIP 105565 / TT01) (Photorhabdus luminescens subsp. laumondii) protein is ADP-L-glycero-D-manno-heptose-6-epimerase.